Here is a 147-residue protein sequence, read N- to C-terminus: Nucleoside diphosphate kinase (147 aa).

Lysine 9, phenylalanine 57, arginine 85, threonine 91, arginine 102, and asparagine 112 together coordinate ATP. Histidine 115 (pros-phosphohistidine intermediate) is an active-site residue.

It belongs to the NDK family. In terms of assembly, homotetramer. Mg(2+) is required as a cofactor.

The protein resides in the cytoplasm. It catalyses the reaction a 2'-deoxyribonucleoside 5'-diphosphate + ATP = a 2'-deoxyribonucleoside 5'-triphosphate + ADP. It carries out the reaction a ribonucleoside 5'-diphosphate + ATP = a ribonucleoside 5'-triphosphate + ADP. Its function is as follows. Major role in the synthesis of nucleoside triphosphates other than ATP. The ATP gamma phosphate is transferred to the NDP beta phosphate via a ping-pong mechanism, using a phosphorylated active-site intermediate. This is Nucleoside diphosphate kinase from Thermosipho africanus (strain TCF52B).